A 1610-amino-acid chain; its full sequence is MATAAETEAPSTDASWKSRGGGGGDDGMKPALPELESSLQNGGGDGGGGAGPEETAAAEAARSYGHEQPQQTSEAAAAALPKGAEEPERPFRRSFQIPRKSREKKALFQPLTPGSREFEDVLNILHSSYLEPSSVTYFNYRRACLIHNELLEKEFTEKRRELKFDGRLDKELSESYAFLMVDRYQVQSICEKGLQVGQSKITVLGSPSMGIYLCRYADLLQANPLEAGAVGDVVIFKIMKGKIKSIYDPLSVKSLESMLSKNALDPTPKHECHVSKNASRITSLLAYRAYELTQYYFYEYGFDEVRRRPRHVCPYAVVSFTYKDDVQTPKFLSPLRSNSFNADRNIDKFNYTLWKGQLLNKGKLLCYISLRSANRAFLPVKLPEKLDVETVMSIDCLKQKIPPSFFYKDTYVGPNEVLKNGMYCSLYEVVEKTRIGSNMECLLQKLEKEKLVLVKPLGDRGYLFLLSPFQMVSPYEHQTVKSRILHALFLFQEPRCLIITQKGIMNTTPLEKPENLADILKITQFLQFSLIQCRKEFKTINTINFHSVVEKYVSEFFKRGFGSGKREFFMFSYDSRLDDRKFLYSAPRNKSHIDDCLHTYIYQPEMYQLSIFKLKELFEENWRRQQFSPLSDYEGQEEELNGSKMKFGKRNNSRDETTEPEQQKSSHSLDYDKDRVKELINLIQCTKKNVGGDPDPEDTKSKNVLKRKLEDLPENMRKFAKTSNSTESCHLYEESPQSIGLLGQDPNLRVQQEDSGNTGDIHKLYNWLSEALANARHSDGFLTETVNKALGLSSSGAYEELKQKCDYELNSTLDKKESEQPACTKIENVHFKDAQSPLLEVDAASVKYPPLLSSSEVGINHKLHCKEDPNLINVNNFEGCSLCPTVSIEHGFLRQHSKSNDDEETEIHWKLIPITGGNAGSPEDQHGKHGEKQTPDTLKGTTEEDTVTAGQAMAVEEQCVPAAELPRVSEITENTVLGEFHLFSRKVEEILKEKNVSYVSAISTPIFSAQEKMNRLSEFIHSNTSKAGVEEFVDGLHEKLNTVVITASAKGVSLPPAVSANHSHAAAALASLGRRVVSISSSDFSAKELFEPLCSEHLKDNNSNEQYSSSVEVEMNRPHHCKELMLTSDHTVPGDTVLEPTEKEITKSPSDITISAQPALSNFISQLEPEVFNSLVKIMKDVQKNTVKFYIHEEEESVLCKEIKEYLTKLGNTECHPDQFLERRSNLDKLLIIIQNEDIAGFIHKVPGLVTLKKLPCVSFAGVDSLDDVKNHTYNELFVSGGFIVSDESILNLEVVTIESLKIFLTFLEELSTPEGKWQWKIHCKFQKKLKELGRMNTKALSLLTLLNVYQKKHLVEILSYHSCDSQTRNAPEMDCLIRLQAQNIQQRHIVFLTEKNIKMVSSYTDNGIVVATTEDFMQNFTSLVGYHNSVTEESLPPLLGANENLESQSALLENDEKDEEDMSLDSGDEISHIEVFSNVHSEILAGETKGSSGTDQKKNIQIELQSSLDVQNSLLEDKTYLIDCEASAPIDRVCSEGESSNSAEQDAYSDFQADQNQLQMSHQCSHFNVLTHQTFLGTPYALSSTRSQENENYFLSAYKNSGTEKSPLS.

Residues 1–96 (MATAAETEAP…PERPFRRSFQ (96 aa)) form a disordered region. Ala2 carries the N-acetylalanine modification. Residues 41-51 (NGGGDGGGGAG) show a composition bias toward gly residues. Residues 52–61 (PEETAAAEAA) are compositionally biased toward low complexity. A Phosphoserine modification is found at Ser339. Residue Lys581 forms a Glycyl lysine isopeptide (Lys-Gly) (interchain with G-Cter in SUMO2) linkage. Phosphoserine occurs at positions 628, 631, and 668. 2 disordered regions span residues 631 to 671 (SDYE…SLDY) and 687 to 710 (KKNVGGDPDPEDTKSKNVLKRKLE). Basic and acidic residues-rich tracts occupy residues 652 to 671 (NSRDETTEPEQQKSSHSLDY) and 697 to 710 (EDTKSKNVLKRKLE). Residue Ser793 is modified to Phosphoserine. Residues Lys816 and Lys825 each participate in a glycyl lysine isopeptide (Lys-Gly) (interchain with G-Cter in SUMO2) cross-link. Ser836 bears the Phosphoserine mark. Residue Lys866 forms a Glycyl lysine isopeptide (Lys-Gly) (interchain with G-Cter in SUMO2) linkage. The tract at residues 915–941 (TGGNAGSPEDQHGKHGEKQTPDTLKGT) is disordered. Phosphoserine occurs at positions 921 and 928. Residues 923 to 934 (EDQHGKHGEKQT) show a composition bias toward basic and acidic residues. Position 1004 is a phosphothreonine (Thr1004). Phosphoserine is present on residues Ser1059 and Ser1508.

It belongs to the TASOR family. As to quaternary structure, component of the HUSH complex; at least composed of TASOR, PPHLN1 and MPHOSPH8. Interacts with MORC2; the interaction associateS MORC2 with the HUSH complex which recruits MORC2 to heterochromatic loci. Interacts with ZNF638; leading to recruitment of the HUSH complex to unintegrated retroviral DNA. Interacts with INPP5A, EML1, SV1L, GPSM2, ITGB3BP, CNTN1, ETFA, PSMD8, S100A10, MPHOSPH8, TMEM100, ALB, PARPBP, HCFC2, NCBP1 and SETDB1. As to expression, present in skin, brain and testis (at protein level). Ubiquitously expressed at low levels in the majority of the organs, expressed at higher levels in kidneys, spleen, thymus, seminal vesicles, uterus, and ovaries and its expression is almost six times higher in male tissues than in females. Highly expressed in seminiferous tubules with a strong signal in Sertoli cells, spermatogonia, and spermatocytes.

It is found in the nucleus. The protein resides in the chromosome. Component of the HUSH complex, a multiprotein complex that mediates epigenetic repression. The HUSH complex is recruited to genomic loci rich in H3K9me3 and is required to maintain transcriptional silencing by promoting recruitment of SETDB1, a histone methyltransferase that mediates further deposition of H3K9me3, as well as MORC2. Also represses L1 retrotransposons in collaboration with MORC2 and, probably, SETDB1, the silencing is dependent of repressive epigenetic modifications, such as H3K9me3 mark. Silencing events often occur within introns of transcriptionally active genes, and lead to the down-regulation of host gene expression. The HUSH complex is also involved in the silencing of unintegrated retroviral DNA by being recruited by ZNF638: some part of the retroviral DNA formed immediately after infection remains unintegrated in the host genome and is transcriptionally repressed. Plays a crucial role in early embryonic development. Involved in the organization of spindle poles and spindle apparatus assembly during zygotic division. Plays an important role in maintaining epiblast fitness or potency. The chain is Protein TASOR from Mus musculus (Mouse).